A 1068-amino-acid chain; its full sequence is Target of Nesh-SH3 (1068 aa).

An N-terminal signal peptide occupies residues 1–21 (MLSSLGCLLLCGSITLALGNA). The N-linked (GlcNAc...) asparagine glycan is linked to Asn-37. The region spanning 116–214 (KPLQLVVGTL…KIFNHKTVVG (99 aa)) is the Fibronectin type-III 1 domain. Disordered stretches follow at residues 315–351 (SKTP…DVSE) and 384–811 (VFSS…SITD). A compositionally biased stretch (low complexity) spans 326–339 (RPTTVTPETVPRST). The segment covering 340–351 (KPTTSSALDVSE) has biased composition (polar residues). Residues 447–462 (QPTTPAPQQTTSIPST) are compositionally biased toward low complexity. A compositionally biased stretch (basic residues) spans 463-473 (PKRRPRPKPPR). Positions 482 to 499 (AGTITPKISKSPEPTWTT) are enriched in polar residues. Positions 532–544 (RAPPKPKTSPRPR) are enriched in pro residues. Over residues 562-574 (PKTSPSPEVSYTT) the composition is skewed to polar residues. Composition is skewed to low complexity over residues 603 to 631 (IPFI…STQE) and 737 to 750 (PPLR…GTPL). Polar residues predominate over residues 802–811 (PDNSPCSITD). One can recognise a Fibronectin type-III 2 domain in the interval 833-926 (PPTNLTVVTV…NTVAFSTESA (94 aa)).

As to quaternary structure, probably interacts with ABI3. In terms of tissue distribution, expressed in brain, heart, lung, liver, pancreas kidney and placenta.

Its subcellular location is the secreted. The sequence is that of Target of Nesh-SH3 from Homo sapiens (Human).